Consider the following 456-residue polypeptide: Enolase (456 aa).

(2R)-2-phosphoglycerate is bound at residue glutamine 177. Glutamate 219 acts as the Proton donor in catalysis. Mg(2+)-binding residues include aspartate 256, glutamate 310, and aspartate 337. (2R)-2-phosphoglycerate is bound by residues lysine 362, arginine 391, serine 392, and lysine 413. Lysine 362 serves as the catalytic Proton acceptor.

Belongs to the enolase family. In terms of assembly, homodimer. Requires Mg(2+) as cofactor.

It is found in the cytoplasm. The protein resides in the secreted. Its subcellular location is the cell surface. The enzyme catalyses (2R)-2-phosphoglycerate = phosphoenolpyruvate + H2O. Its pathway is carbohydrate degradation; glycolysis; pyruvate from D-glyceraldehyde 3-phosphate: step 4/5. In terms of biological role, catalyzes the reversible conversion of 2-phosphoglycerate (2-PG) into phosphoenolpyruvate (PEP). It is essential for the degradation of carbohydrates via glycolysis. Functionally, 'Moonlights' as a plasminogen receptor. Binds plasminogen, but no fibronectin binding was observed. Plasminogen binding increases bacterial adherence to host cells; plasmin activity leads to degradation of host extracellular matrix proteins, facilitating bacterial dissemination and disease spread. The protein is Enolase of Mycoplasma pneumoniae (strain ATCC 29342 / M129 / Subtype 1) (Mycoplasmoides pneumoniae).